Consider the following 430-residue polypeptide: MSWRWALARRVAALGATSGGGDGATAQAQRLFSSAAALLGRHPPPPSPPHYQIRSKVVGCRGATFVSSRWLHDAQYQVRQDGLSRSEEQQDPFELVADELSLLANRLRSMVAAEVPKLASAAEYFFKVGAEGKRFRPTVLLLMASALKFPLSDSTEVGVLTILANKLRTRQQNIAEITEMIHVASLLHDDVLDDADTRRGVSSLNCIMGNKLSVLAGDFLLSRACVALAALGNTEVVSLMATAVEHLVTGETMQISTSREQRRSMDYYLQKTYYKTASLISNSCKAVAILAGHTADVSMLAYEYGRNLGLAFQLIDDVLDFTGTSASLGKGSLTDIRHGIITAPMLYAMEEFPQLHEVVDRGFDNPANVELALDYLQKSRGIEKTKELAREHANRAIKAIEALPDSDDEDVLTSRRALIDITERVITRTK.

Residues 1–31 constitute a mitochondrion transit peptide; sequence MSWRWALARRVAALGATSGGGDGATAQAQRL. Lys-133, Arg-136, and His-182 together coordinate isopentenyl diphosphate. Residues Asp-189 and Asp-193 each contribute to the Mg(2+) site. Arg-198 contacts an all-trans-polyprenyl diphosphate. An isopentenyl diphosphate-binding site is contributed by Arg-199. Lys-275, Thr-276, Gln-313, and Lys-330 together coordinate an all-trans-polyprenyl diphosphate.

It belongs to the FPP/GGPP synthase family. Homodimer. Mg(2+) is required as a cofactor. As to expression, expressed in leaves, stems and roots. Highest expression in roots.

The protein resides in the mitochondrion. The catalysed reaction is 7 isopentenyl diphosphate + (2E)-geranyl diphosphate = all-trans-nonaprenyl diphosphate + 7 diphosphate. Its pathway is cofactor biosynthesis; ubiquinone biosynthesis. In terms of biological role, involved in the supply of solanesyl diphosphate for ubiquinone-9 (UQ-9) biosynthesis in mitochondria. Farnesyl diphosphate is the preferred substrate. This chain is Solanesyl-diphosphate synthase 1, mitochondrial, found in Oryza sativa subsp. japonica (Rice).